The following is a 955-amino-acid chain: Beta-agarase B (955 aa).

This sequence belongs to the glycosyl hydrolase 50 family.

The catalysed reaction is Hydrolysis of (1-&gt;4)-beta-D-galactosidic linkages in agarose, giving the tetramer as the predominant product.. Hydrolyzes agarose to yield predominantly neoagarotetraose and neoagarohexaose. This Vibrio sp. (strain JT0107) protein is Beta-agarase B (agaB).